The following is a 193-amino-acid chain: Early light-induced protein 2, chloroplastic (193 aa).

The transit peptide at 1–43 directs the protein to the chloroplast; the sequence is MATASFNMQSVFAAPSGVLTTRNIRNTNQLFFKRIAPVGVRCM. The interval 46–80 is disordered; that stretch reads GDPIKEDPSVPSTSTSATPPQMPQSPPPPVSKPKV. The span at 54-64 shows a compositional bias: low complexity; the sequence is SVPSTSTSATP. Residues 65–76 are compositionally biased toward pro residues; sequence PQMPQSPPPPVS. 3 helical membrane-spanning segments follow: residues 102-122, 129-149, and 173-193; these read LAMV…ENVF, GVGW…VPLF, and FAML…GTLV.

It belongs to the ELIP/psbS family.

It is found in the plastid. The protein resides in the chloroplast thylakoid membrane. Functionally, probably involved in the integration of pigments into the mature light-harvesting pigment-protein complexes. Light-harvesting chlorophyll (LHC) a/b-binding protein required to ensure a high rate of chlorophyll accumulation during deetiolation in continuous high light. Involved in seed germination. May fulfill a photoprotective functions. Prevents excess accumulation of free chlorophyll by inhibiting the entire chlorophyll biosynthesis pathway (e.g. 5-aminolevulinate synthesis and Mg-protoporphyrin IX chelatase activity), and hence prevent photooxidative stress. The protein is Early light-induced protein 2, chloroplastic of Arabidopsis thaliana (Mouse-ear cress).